We begin with the raw amino-acid sequence, 945 residues long: MKRFTVCCFSNKIHKNGDRNPDKKSRESMEVSRKDNEEPEKQNNNNVASIIGSDRTNVIVNHDFSSGMHSWHPNCCEAFVVTAESNVSHGVLDPSKCGSYVVVKNRKETWQGLEQDITNRVKPCSLYKVSATVAVSGPVHGLVEVMATLKLESQQSQTNYQFIAKTCVFKEKWVRLEGMFSLPSLPEKVVFYLEGPSPGIDLLIQSVTIHRESEPELERVTAEDETIVVNPNFEDGLNNWSGRSCKIVLHDSMADGKIVPESGKVFASATERTQNWNGIQQEITGKVQRKRVYEATAVVRIYGNNVTTATVQATLWVQNPNQRDQYIGISTVQATDKEWIHLKGKFLLNGSASRVVIYIEGPPPGTDILLNSLTVKHAEKIPPSPPPSIENPAFGVNILTNSHLSDDTTNGWFSLGNCTLSVAEGSPRILPPMARDSLGAHERLSGRYILVTNRTQTWMGPAQMITDKLKLFLTYQISVWVKVGSGINSPQNVNVALGIDSQWVNGGQVEINDDRWHEIGGSFRIEKNPSKALVYVQGPSSGIDLMVAGLQIFPVDRLARIKHLKRQCDKIRKRDVILKFAGVDSSKFSGASVRVRQIRNSFPVGTCISRSNIDNEDFVDFFLKNFNWAVFANELKWYWTEPEQGKLNYQDADDMLNLCSSNNIETRGHCIFWEVQATVQQWIQNMNQTDLNNAVQNRLTDLLNRYKGKFKHYDVNNEMLHGSFYQDKLGKDIRVNMFKTAHQLDPSATLFVNDYHIEDGCDPKSCPEKYTEQILDLQEKGAPVGGIGIQGHIDSPVGPIVCSALDKLGILGLPIWFTELDVSSVNEHIRADDLEVMMWEAFGHPAVEGIMLWGFWELFMSRDNSHLVNAEGDVNEAGKRFLAVKKDWLSHANGHIDQNGAFPFRGYSGNYAVEVITTSSSKVLKTFGVDKEDSSQVITVDLQGL.

Basic and acidic residues predominate over residues 16–41 (NGDRNPDKKSRESMEVSRKDNEEPEK). The disordered stretch occupies residues 16–50 (NGDRNPDKKSRESMEVSRKDNEEPEKQNNNNVASI). 3 consecutive CBM-cenC domains span residues 57–197 (NVIV…EGPS), 227–362 (IVVN…IEGP), and 397–541 (NILT…GPSS). Residues Asn86, Asn239, Asn305, Asn349, Asn417, Asn453, and Asn687 are each glycosylated (N-linked (GlcNAc...) asparagine). The region spanning 589-884 (SGASVRVRQI…NEAGKRFLAV (296 aa)) is the GH10 domain. Glu718 acts as the Proton donor in catalysis. The Nucleophile role is filled by Glu819.

Belongs to the glycosyl hydrolase 10 (cellulase F) family. Predominantly expressed in vascular bundles, but not in vessel cells. Mostly expressed in stems, at lower levels in roots, and weakly in inflorescences and seedlings.

Its subcellular location is the secreted. The protein localises to the cell wall. It catalyses the reaction Endohydrolysis of (1-&gt;4)-beta-D-xylosidic linkages in xylans.. It participates in glycan degradation; xylan degradation. Functionally, binds to and hydrolyzes insoluble and soluble xylan substrates. Exhibits xylanase activity. This chain is Endo-1,4-beta-xylanase 1, found in Arabidopsis thaliana (Mouse-ear cress).